The primary structure comprises 80 residues: Small ribosomal subunit protein bS16c (80 aa).

Belongs to the bacterial ribosomal protein bS16 family.

The protein localises to the plastid. Its subcellular location is the chloroplast. The chain is Small ribosomal subunit protein bS16c from Lotus japonicus (Lotus corniculatus var. japonicus).